The primary structure comprises 388 residues: Galactokinase (388 aa).

E32 to D35 provides a ligand contact to substrate. Residues S66 and G123–S129 each bind ATP. Mg(2+) is bound by residues S129 and E161. D173 (proton acceptor) is an active-site residue. Y223 serves as a coordination point for substrate.

Belongs to the GHMP kinase family. GalK subfamily.

The protein resides in the cytoplasm. It carries out the reaction alpha-D-galactose + ATP = alpha-D-galactose 1-phosphate + ADP + H(+). It participates in carbohydrate metabolism; galactose metabolism. In terms of biological role, catalyzes the transfer of the gamma-phosphate of ATP to D-galactose to form alpha-D-galactose-1-phosphate (Gal-1-P). The protein is Galactokinase of Staphylococcus carnosus (strain TM300).